The following is an 862-amino-acid chain: AP-1 complex subunit gamma-2 (862 aa).

11 HEAT repeats span residues Met1–Ala28, Val29–Pro65, Glu101–Glu136, Met137–Asp173, Gly308–Gln345, Ala346–Val382, Pro384–Pro417, Glu418–Asp454, Tyr458–Gly496, Thr507–Ser545, and Ser560–Ser599. The 116-residue stretch at Ala744–Pro859 folds into the GAE domain.

The protein belongs to the adaptor complexes large subunit family. In terms of assembly, adaptor protein complex 1 (AP-1) is a heterotetramer composed of two large adaptins (gamma-type subunit and beta-type subunit), a medium adaptin (mu-type subunit) and a small adaptin (sigma-type subunit).

It localises to the golgi apparatus. The protein localises to the cytoplasmic vesicle. The protein resides in the clathrin-coated vesicle membrane. Its function is as follows. Subunit of clathrin-associated adaptor protein complex 1 that plays a role in protein sorting at the trans-Golgi network and early endosomes (TGN/EE). The AP complexes mediate both the recruitment of clathrin to membranes and the recognition of sorting signals within the cytosolic tails of transmembrane cargo molecules. In Arabidopsis thaliana (Mouse-ear cress), this protein is AP-1 complex subunit gamma-2.